Here is a 371-residue protein sequence, read N- to C-terminus: tRNA-specific 2-thiouridylase MnmA (371 aa).

ATP is bound by residues 12–19 and M38; that span reads GMSGGVDS. Residues 98–100 are interaction with target base in tRNA; the sequence is NPD. C103 serves as the catalytic Nucleophile. A disulfide bond links C103 and C200. Residue G128 participates in ATP binding. Residues 150–152 are interaction with tRNA; sequence KDQ. The Cysteine persulfide intermediate role is filled by C200. Positions 312-313 are interaction with tRNA; it reads RY.

The protein belongs to the MnmA/TRMU family. Interacts with TusE.

It localises to the cytoplasm. The catalysed reaction is S-sulfanyl-L-cysteinyl-[protein] + uridine(34) in tRNA + AH2 + ATP = 2-thiouridine(34) in tRNA + L-cysteinyl-[protein] + A + AMP + diphosphate + H(+). Functionally, catalyzes the 2-thiolation of uridine at the wobble position (U34) of tRNA(Lys), tRNA(Glu) and tRNA(Gln), leading to the formation of s(2)U34, the first step of tRNA-mnm(5)s(2)U34 synthesis. Sulfur is provided by IscS, via a sulfur-relay system. Binds ATP and its substrate tRNAs. In Yersinia pseudotuberculosis serotype O:1b (strain IP 31758), this protein is tRNA-specific 2-thiouridylase MnmA.